The sequence spans 72 residues: Disintegrin cereberin (72 aa).

The region spanning 1 to 72 (EAGEECDCGS…SADCPRNRFH (72 aa)) is the Disintegrin domain. 6 cysteine pairs are disulfide-bonded: C6–C21, C8–C16, C15–C38, C29–C35, C34–C59, and C47–C66. The Cell attachment site signature appears at 51-53 (RGD). Residues 51 to 72 (RGDNPDDRCTGQSADCPRNRFH) form a disordered region.

It belongs to the venom metalloproteinase (M12B) family. P-II subfamily. P-IIa sub-subfamily. In terms of assembly, monomer (disintegrin). Expressed by the venom gland.

The protein localises to the secreted. Functionally, inhibits fibrinogen interaction with platelet. Acts by binding to alpha-IIb/beta-3 (ITGA2B/ITGB3) on the platelet surface and inhibits aggregation induced by ADP, thrombin, platelet-activating factor and collagen. The polypeptide is Disintegrin cereberin (Crotalus cerberus (Arizona black rattlesnake)).